Reading from the N-terminus, the 540-residue chain is Chaperonin GroEL (540 aa).

ATP is bound by residues 30–33 (TLGP), 87–91 (DGTTT), Gly-414, 479–481 (NAL), and Asp-495.

This sequence belongs to the chaperonin (HSP60) family. Forms a cylinder of 14 subunits composed of two heptameric rings stacked back-to-back. Interacts with the co-chaperonin GroES.

The protein localises to the cytoplasm. The catalysed reaction is ATP + H2O + a folded polypeptide = ADP + phosphate + an unfolded polypeptide.. Its function is as follows. Together with its co-chaperonin GroES, plays an essential role in assisting protein folding. The GroEL-GroES system forms a nano-cage that allows encapsulation of the non-native substrate proteins and provides a physical environment optimized to promote and accelerate protein folding. In Carboxydothermus hydrogenoformans (strain ATCC BAA-161 / DSM 6008 / Z-2901), this protein is Chaperonin GroEL.